The following is a 454-amino-acid chain: tRNA modification GTPase MnmE (454 aa).

(6S)-5-formyl-5,6,7,8-tetrahydrofolate-binding residues include Arg-23, Glu-80, and Lys-120. One can recognise a TrmE-type G domain in the interval 216–377; the sequence is GMKVVIAGRP…LRDHLKSSMG (162 aa). Position 226 (Asn-226) interacts with K(+). GTP contacts are provided by residues 226 to 231, 245 to 251, 270 to 273, 335 to 338, and 358 to 360; these read NAGKSS, TDIAGTT, DTAG, NKAD, and SAR. Ser-230 contacts Mg(2+). 3 residues coordinate K(+): Thr-245, Ile-247, and Thr-250. A Mg(2+)-binding site is contributed by Thr-251. Residue Lys-454 coordinates (6S)-5-formyl-5,6,7,8-tetrahydrofolate.

Belongs to the TRAFAC class TrmE-Era-EngA-EngB-Septin-like GTPase superfamily. TrmE GTPase family. As to quaternary structure, homodimer. Heterotetramer of two MnmE and two MnmG subunits. K(+) is required as a cofactor.

It is found in the cytoplasm. Its function is as follows. Exhibits a very high intrinsic GTPase hydrolysis rate. Involved in the addition of a carboxymethylaminomethyl (cmnm) group at the wobble position (U34) of certain tRNAs, forming tRNA-cmnm(5)s(2)U34. This chain is tRNA modification GTPase MnmE, found in Erwinia tasmaniensis (strain DSM 17950 / CFBP 7177 / CIP 109463 / NCPPB 4357 / Et1/99).